A 429-amino-acid polypeptide reads, in one-letter code: MANVTIIGAQWGDEGKGKVVDWLASRADVVVRFQGGHNAGHTLVVGNQTYKLSLLPSGLVRGKLGVIGNGVVVDPVALLAEIGRVREQGLNVTPETLRIADNAPLILPLHAALDAAREAARGARRIGTTGRGIGPAYEDKVARRAIRICDLAEPETLDWRLDELLLHHNTLLAGLGAPTFGKAELMDQLLALAPQILPFAEPVWERLAEAKKSGARILFEGAQAVMLDVDHGTYPFVTSSNTVSGQIAAGAGVGPDAAGRVLGIAKAYSTRVGSGPFPTEQDNETGRLLGERGHEFGTVTGRARRCGWFDAALVRQAVKVGGIQGLALTKLDVLDGMTTLQIGVGYRIGGETLPHLPPGAAAQAKAEPVYETIEGWSGSTRGARSYADLPAQAIKYVRRIEELVECPVTLLSTSPERDDTILMQDPFAD.

GTP contacts are provided by residues 12–18 and 40–42; these read GDEGKGK and GHT. D13 acts as the Proton acceptor in catalysis. Mg(2+) is bound by residues D13 and G40. IMP is bound by residues 13–16, 38–41, T129, R143, Q223, T238, and R302; these read DEGK and NAGH. The active-site Proton donor is the H41. A substrate-binding site is contributed by 298–304; the sequence is TVTGRAR. GTP is bound by residues R304, 330-332, and 412-414; these read KLD and STS.

The protein belongs to the adenylosuccinate synthetase family. Homodimer. The cofactor is Mg(2+).

It is found in the cytoplasm. It catalyses the reaction IMP + L-aspartate + GTP = N(6)-(1,2-dicarboxyethyl)-AMP + GDP + phosphate + 2 H(+). Its pathway is purine metabolism; AMP biosynthesis via de novo pathway; AMP from IMP: step 1/2. Its function is as follows. Plays an important role in the de novo pathway of purine nucleotide biosynthesis. Catalyzes the first committed step in the biosynthesis of AMP from IMP. This Acidiphilium cryptum (strain JF-5) protein is Adenylosuccinate synthetase.